A 634-amino-acid chain; its full sequence is Sodium-dependent neutral amino acid transporter B(0)AT1 (634 aa).

Over 1 to 41 the chain is Cytoplasmic; that stretch reads MVRLVLPNPGLDARIPSLAELETIEQEEASSRPKWDNKAQY. Ser-17 is subject to Phosphoserine. Residues 42-62 traverse the membrane as a helical segment; the sequence is MLTCLGFCVGLGNVWRFPYLC. At 63–67 the chain is on the extracellular side; that stretch reads QSHGG. The helical transmembrane segment at 68 to 88 threads the bilayer; that stretch reads GAFMIPFLILLVLEGIPLLYL. Topologically, residues 89-120 are cytoplasmic; sequence EFAIGQRLRRGSLGVWSSIHPALKGLGLASML. The helical transmembrane segment at 121–141 threads the bilayer; that stretch reads TSFMVGLYYNTIISWIMWYLF. Residues 142 to 192 are Extracellular-facing; the sequence is NSFQEPLPWSDCPLNENQTGYVDECARSSPVDYFWYRETLNISTSISDSGS. Residues Asn-158 and Asn-182 are each glycosylated (N-linked (GlcNAc...) asparagine). The chain crosses the membrane as a helical span at residues 193–213; sequence IQWWMLLCLACAWSVLYMCTI. Over 214-221 the chain is Cytoplasmic; sequence RGIETTGK. The helical transmembrane segment at 222–242 threads the bilayer; the sequence is AVYITSTLPYVVLTIFLIRGL. The Extracellular portion of the chain corresponds to 243–268; it reads TLKGATNGIVFLFTPNVTELAQPDTW. N-linked (GlcNAc...) asparagine glycosylation occurs at Asn-258. A helical transmembrane segment spans residues 269 to 289; sequence LDAGAQVFFSFSLAFGGLISF. The Cytoplasmic portion of the chain corresponds to 290 to 304; the sequence is SSYNSVHNNCEKDSV. The chain crosses the membrane as a helical span at residues 305 to 325; sequence IVSIINGFTSVYVAIVVYSVI. Topologically, residues 326–413 are extracellular; sequence GFRATQRYDD…TEAITKMPLS (88 aa). 2 N-linked (GlcNAc...) asparagine glycosylation sites follow: Asn-354 and Asn-368. The chain crosses the membrane as a helical span at residues 414–434; the sequence is PLWSVLFFIMLFCLGLSSMFG. The Cytoplasmic portion of the chain corresponds to 435 to 456; it reads NMEGVVVPLQDLRVIPPKWPKE. Residues 457-477 traverse the membrane as a helical segment; sequence VLTGLICLGTFLIGFIFTLNS. Over 478–490 the chain is Extracellular; that stretch reads GQYWLSLLDSYAG. The helical transmembrane segment at 491-511 threads the bilayer; it reads SIPLLIIAFCEMFSVVYVYGV. The Cytoplasmic segment spans residues 512–531; it reads DRFNKDIEFMIGHKPNIFWQ. Residues 532–552 traverse the membrane as a helical segment; the sequence is VTWRVVSPLLMLIIFLFFFVV. Residues 553-581 are Extracellular-facing; the sequence is EVSQELTYSIWDPGYEEFPKSQKISYPNW. A helical membrane pass occupies residues 582-602; the sequence is VYVVVVIVAGVPSLTIPGYAI. The Cytoplasmic segment spans residues 603-634; it reads YKLIRNHCQKPGDHQGLVSTLSTASMNGDLKY. Ser-627 carries the phosphoserine modification.

Belongs to the sodium:neurotransmitter symporter (SNF) (TC 2.A.22) family. SLC6A19 subfamily. As to quaternary structure, interacts in a tissue-specific manner with ACE2 in small intestine and with CLTRN in the kidney. Interacts with CLTRN; this interaction is required for trafficking of SLC6A19 to the plasma membrane and for its catalytic activation in kidneys. Interacts with ACE2; this interaction is required for trafficking of SLC6A19 to the plasma membrane and for its catalytic activation in intestine. Interacts with ANPEP; the interaction positively regulates its amino acid transporter activity. In terms of tissue distribution, robust expression in kidney and small intestine, with minimal expression in pancreas. Also expressed in stomach, liver, duodenum, ileocecum, colon and prostate. Not detected in testis, whole brain, cerebellum, fetal liver, spleen, skeletal muscle, uterus, heart or lung.

The protein localises to the cell membrane. It is found in the apical cell membrane. The enzyme catalyses L-alanine(in) + Na(+)(in) = L-alanine(out) + Na(+)(out). It carries out the reaction L-cysteine(in) + Na(+)(in) = L-cysteine(out) + Na(+)(out). The catalysed reaction is L-glutamine(in) + Na(+)(in) = L-glutamine(out) + Na(+)(out). It catalyses the reaction glycine(in) + Na(+)(in) = glycine(out) + Na(+)(out). The enzyme catalyses L-isoleucine(in) + Na(+)(in) = L-isoleucine(out) + Na(+)(out). It carries out the reaction L-leucine(in) + Na(+)(in) = L-leucine(out) + Na(+)(out). The catalysed reaction is L-methionine(in) + Na(+)(in) = L-methionine(out) + Na(+)(out). It catalyses the reaction L-phenylalanine(in) + Na(+)(in) = L-phenylalanine(out) + Na(+)(out). The enzyme catalyses L-serine(in) + Na(+)(in) = L-serine(out) + Na(+)(out). It carries out the reaction L-tryptophan(in) + Na(+)(in) = L-tryptophan(out) + Na(+)(out). The catalysed reaction is L-tyrosine(in) + Na(+)(in) = L-tyrosine(out) + Na(+)(out). It catalyses the reaction L-valine(in) + Na(+)(in) = L-valine(out) + Na(+)(out). Functionally, transporter that mediates resorption of neutral amino acids across the apical membrane of renal and intestinal epithelial cells. This uptake is sodium-dependent and chloride-independent. Requires CLTRN in kidney or ACE2 in intestine for cell surface expression and amino acid transporter activity. The protein is Sodium-dependent neutral amino acid transporter B(0)AT1 (SLC6A19) of Homo sapiens (Human).